A 435-amino-acid polypeptide reads, in one-letter code: GTPase Der (435 aa).

2 consecutive EngA-type G domains span residues 4 to 167 and 175 to 350; these read PVVA…PEKD and IRFS…DNHN. GTP-binding positions include 10-17, 57-61, 119-122, 181-188, 228-232, and 293-296; these read GRPNVGKS, DTGGI, NKAD, DTAGI, and NKWD. The region spanning 351-435 is the KH-like domain; it reads KRVQSATLND…PIHLIERARK (85 aa).

This sequence belongs to the TRAFAC class TrmE-Era-EngA-EngB-Septin-like GTPase superfamily. EngA (Der) GTPase family. Associates with the 50S ribosomal subunit.

Its function is as follows. GTPase that plays an essential role in the late steps of ribosome biogenesis. The chain is GTPase Der from Levilactobacillus brevis (strain ATCC 367 / BCRC 12310 / CIP 105137 / JCM 1170 / LMG 11437 / NCIMB 947 / NCTC 947) (Lactobacillus brevis).